Here is a 92-residue protein sequence, read N- to C-terminus: Exodeoxyribonuclease 7 small subunit (92 aa).

Low complexity predominate over residues 71-84 (AESAGTAKSAVAAD). The interval 71–92 (AESAGTAKSAVAADSRGAADSA) is disordered.

It belongs to the XseB family. In terms of assembly, heterooligomer composed of large and small subunits.

It localises to the cytoplasm. The catalysed reaction is Exonucleolytic cleavage in either 5'- to 3'- or 3'- to 5'-direction to yield nucleoside 5'-phosphates.. Bidirectionally degrades single-stranded DNA into large acid-insoluble oligonucleotides, which are then degraded further into small acid-soluble oligonucleotides. The protein is Exodeoxyribonuclease 7 small subunit of Leifsonia xyli subsp. xyli (strain CTCB07).